The sequence spans 187 residues: MASAHDRAVLQAIFNPTSPIGDVPGLNQEEELMDDDSAFDPELVKQVKDLELQGVSSAESGDLPAALQHFNQAISVLPQRASAYNNRAQTKRLLGDTKGAVEDLEHAISLSNGKGRSACQALVQRGLLLRLSGHDEEARLDFERAAALGSEFARQQAVILNPYAALCNRMLSEVISKLRNPEVSEMQ.

TPR repeat units lie at residues 47–80 (VKDL…LPQR), 82–114 (SAYN…SNGK), and 119–152 (CQAL…GSEF).

This sequence belongs to the TTC36 family.

This chain is Tetratricopeptide repeat protein 36 (ttc36), found in Danio rerio (Zebrafish).